We begin with the raw amino-acid sequence, 258 residues long: Thiazole synthase (258 aa).

The active-site Schiff-base intermediate with DXP is the K98. 1-deoxy-D-xylulose 5-phosphate is bound by residues G159, A185–G186, and N207–T208.

This sequence belongs to the ThiG family. Homotetramer. Forms heterodimers with either ThiH or ThiS.

The protein localises to the cytoplasm. It carries out the reaction [ThiS sulfur-carrier protein]-C-terminal-Gly-aminoethanethioate + 2-iminoacetate + 1-deoxy-D-xylulose 5-phosphate = [ThiS sulfur-carrier protein]-C-terminal Gly-Gly + 2-[(2R,5Z)-2-carboxy-4-methylthiazol-5(2H)-ylidene]ethyl phosphate + 2 H2O + H(+). It functions in the pathway cofactor biosynthesis; thiamine diphosphate biosynthesis. Functionally, catalyzes the rearrangement of 1-deoxy-D-xylulose 5-phosphate (DXP) to produce the thiazole phosphate moiety of thiamine. Sulfur is provided by the thiocarboxylate moiety of the carrier protein ThiS. In vitro, sulfur can be provided by H(2)S. The sequence is that of Thiazole synthase from Bacillus cereus (strain ZK / E33L).